The primary structure comprises 619 residues: Tyrosine-protein kinase ZAP-70 (619 aa).

One can recognise an SH2 1 domain in the interval Phe10–Cys102. The interdomain A stretch occupies residues Asn103 to Pro162. Residues Trp163–Cys254 form the SH2 2 domain. Residue Tyr248 is modified to Phosphotyrosine. An interdomain B region spans residues Pro255 to Leu337. Positions Ser260–Pro309 are disordered. Ser289 is modified (phosphoserine). Tyr292 carries the phosphotyrosine modification. Residue Tyr315 is modified to Phosphotyrosine; by LCK. Tyr319 carries the post-translational modification Phosphotyrosine. The Protein kinase domain maps to Leu338–Leu600. Residues Gly345–Val352 and Lys369 contribute to the ATP site. The Proton acceptor role is filled by Asp461. Phosphotyrosine occurs at positions 492 and 493. A Glycyl lysine isopeptide (Lys-Gly) (interchain with G-Cter in ubiquitin) cross-link involves residue Lys544. Lys603 carries the post-translational modification N6-acetyllysine.

Belongs to the protein kinase superfamily. Tyr protein kinase family. SYK/ZAP-70 subfamily. Interacts with CD247/CD3Z; this interaction docks ZAP70 at the stimulated TCR. Interacts with NFAM1. Interacts with adapter protein SLA; this interaction negatively regulates T-cell receptor signaling. Interacts with FCRL3. Interacts with VAV1. Interacts with CBL; this interaction promotes ubiquitination, internalization and subsequent degradation of CD247/CD3Z. Identified in a complex with CBL and UBE2L3. Interacts with SHB. Interacts with adapter protein SLA2; this interaction negatively regulates T-cell receptor signaling. Interacts with CBLB. Interacts (via SH2 domains) with RHOH; this interaction regulates ZAP70 subcellular localization. Interacts with DEF6. Interacts (ubiquitinated form) with OTUD7B and UBASH3B. Post-translationally, phosphorylated on tyrosine residues upon T-cell antigen receptor (TCR) stimulation. Phosphorylation of Tyr-315 and Tyr-319 are essential for ZAP70 positive function on T-lymphocyte activation whereas Tyr-292 has a negative regulatory role. Within the C-terminal kinase domain, Tyr-492 and Tyr-493 are phosphorylated after TCR induction, Tyr-492 playing a negative regulatory role and Tyr-493 a positive. Tyr-493 is dephosphorylated by PTN22. Ubiquitinated in response to T cell activation. Deubiquitinated by OTUD7B. Expressed in T- and natural killer cells. Also present in early thymocytes and pro/pre B-cells.

Its subcellular location is the cytoplasm. The protein localises to the cell membrane. The enzyme catalyses L-tyrosyl-[protein] + ATP = O-phospho-L-tyrosyl-[protein] + ADP + H(+). Activated by phosphorylation at Tyr-493 in the activation loop. Inhibited by staurosporine. In terms of biological role, tyrosine kinase that plays an essential role in regulation of the adaptive immune response. Regulates motility, adhesion and cytokine expression of mature T-cells, as well as thymocyte development. Also contributes to the development and activation of primary B-lymphocytes. When antigen presenting cells (APC) activate T-cell receptor (TCR), a serie of phosphorylations lead to the recruitment of ZAP70 to the doubly phosphorylated TCR component CD247/CD3Z through ITAM motif at the plasma membrane. This recruitment serves to localization to the stimulated TCR and to relieve its autoinhibited conformation. Release of ZAP70 active conformation is further stabilized by phosphorylation mediated by LCK. Subsequently, ZAP70 phosphorylates at least 2 essential adapter proteins: LAT and LCP2. In turn, a large number of signaling molecules are recruited and ultimately lead to lymphokine production, T-cell proliferation and differentiation. Furthermore, ZAP70 controls cytoskeleton modifications, adhesion and mobility of T-lymphocytes, thus ensuring correct delivery of effectors to the APC. ZAP70 is also required for TCR-CD247/CD3Z internalization and degradation through interaction with the E3 ubiquitin-protein ligase CBL and adapter proteins SLA and SLA2. Thus, ZAP70 regulates both T-cell activation switch on and switch off by modulating TCR expression at the T-cell surface. During thymocyte development, ZAP70 promotes survival and cell-cycle progression of developing thymocytes before positive selection (when cells are still CD4/CD8 double negative). Additionally, ZAP70-dependent signaling pathway may also contribute to primary B-cells formation and activation through B-cell receptor (BCR). This Homo sapiens (Human) protein is Tyrosine-protein kinase ZAP-70 (ZAP70).